Consider the following 118-residue polypeptide: Large ribosomal subunit protein bL20 (118 aa).

This sequence belongs to the bacterial ribosomal protein bL20 family.

Functionally, binds directly to 23S ribosomal RNA and is necessary for the in vitro assembly process of the 50S ribosomal subunit. It is not involved in the protein synthesizing functions of that subunit. The protein is Large ribosomal subunit protein bL20 of Trichodesmium erythraeum (strain IMS101).